The sequence spans 356 residues: Glycerophosphodiester phosphodiesterase (356 aa).

The signal sequence occupies residues 1–20 (MRGTYCVTLWGGVFAALVAG). The N-palmitoyl cysteine moiety is linked to residue Cys21. A lipid anchor (S-diacylglycerol cysteine) is attached at Cys21. One can recognise a GP-PDE domain in the interval 25–314 (RMIVAYRGAA…CHVHTVRKET (290 aa)).

This sequence belongs to the glycerophosphoryl diester phosphodiesterase family. In terms of processing, palmitoylated upon expression of a fusion protein with first 40 residues fused to PhoA in E.coli.

The protein localises to the cell inner membrane. It carries out the reaction a sn-glycero-3-phosphodiester + H2O = an alcohol + sn-glycerol 3-phosphate + H(+). Functionally, glycerophosphoryl diester phosphodiesterase hydrolyzes deacylated phospholipids to G3P and the corresponding alcohols. Binds human IgA, IgD and the Fc portion of IgG but not IgM, which may contribute to evasion of the human immune system. The chain is Glycerophosphodiester phosphodiesterase (glpQ) from Treponema pallidum (strain Nichols).